The chain runs to 110 residues: Vacuolar ATPase assembly integral membrane protein VMA21 (110 aa).

The disordered stretch occupies residues 1–28 (MTTRRIIGQDGEEKTYLDVDPRGPPGPS). At 1–44 (MTTRRIIGQDGEEKTYLDVDPRGPPGPSNISPAVPASVIWKLMS) the chain is on the cytoplasmic side. Over residues 11-21 (GEEKTYLDVDP) the composition is skewed to basic and acidic residues. The chain crosses the membrane as a helical span at residues 45 to 65 (FTFAMITLPIGTYFFTVNYVF). The Lumenal segment spans residues 66 to 71 (GGNATY). Residues 72-92 (AGALAAIMANVVLIAYVIMAF) form a helical membrane-spanning segment. Topologically, residues 93 to 110 (KDDQAEQAEDAREAKKEL) are cytoplasmic. The Prevents secretion from ER signature appears at 107 to 110 (KKEL).

It belongs to the VMA21 family.

The protein localises to the endoplasmic reticulum membrane. It localises to the endoplasmic reticulum-Golgi intermediate compartment membrane. It is found in the cytoplasmic vesicle. Its subcellular location is the COPII-coated vesicle membrane. Required for the assembly of the V0 complex of the vacuolar ATPase (V-ATPase) in the endoplasmic reticulum. The protein is Vacuolar ATPase assembly integral membrane protein VMA21 of Phaeosphaeria nodorum (strain SN15 / ATCC MYA-4574 / FGSC 10173) (Glume blotch fungus).